The primary structure comprises 549 residues: Dihydroxy-acid dehydratase (549 aa).

D78 provides a ligand contact to Mg(2+). Position 119 (C119) interacts with [2Fe-2S] cluster. D120 and K121 together coordinate Mg(2+). N6-carboxylysine is present on K121. C191 provides a ligand contact to [2Fe-2S] cluster. Mg(2+) is bound at residue E441. S466 serves as the catalytic Proton acceptor.

It belongs to the IlvD/Edd family. As to quaternary structure, homodimer. The cofactor is [2Fe-2S] cluster. It depends on Mg(2+) as a cofactor.

The enzyme catalyses (2R)-2,3-dihydroxy-3-methylbutanoate = 3-methyl-2-oxobutanoate + H2O. It carries out the reaction (2R,3R)-2,3-dihydroxy-3-methylpentanoate = (S)-3-methyl-2-oxopentanoate + H2O. The protein operates within amino-acid biosynthesis; L-isoleucine biosynthesis; L-isoleucine from 2-oxobutanoate: step 3/4. Its pathway is amino-acid biosynthesis; L-valine biosynthesis; L-valine from pyruvate: step 3/4. Functionally, functions in the biosynthesis of branched-chain amino acids. Catalyzes the dehydration of (2R,3R)-2,3-dihydroxy-3-methylpentanoate (2,3-dihydroxy-3-methylvalerate) into 2-oxo-3-methylpentanoate (2-oxo-3-methylvalerate) and of (2R)-2,3-dihydroxy-3-methylbutanoate (2,3-dihydroxyisovalerate) into 2-oxo-3-methylbutanoate (2-oxoisovalerate), the penultimate precursor to L-isoleucine and L-valine, respectively. The sequence is that of Dihydroxy-acid dehydratase from Methanobrevibacter smithii (strain ATCC 35061 / DSM 861 / OCM 144 / PS).